Consider the following 160-residue polypeptide: Nucleotide-binding protein ASA_3207 (160 aa).

Belongs to the YajQ family.

Nucleotide-binding protein. The chain is Nucleotide-binding protein ASA_3207 from Aeromonas salmonicida (strain A449).